The following is a 286-amino-acid chain: Cysteine-rich repeat secretory protein 57 (286 aa).

An N-terminal signal peptide occupies residues 1-20 (METTKKLSVLLCLFFTMNQA). Residues 21–265 (ISESDSDEHM…PSRSGSFSIR (245 aa)) lie on the Extracellular side of the membrane. 2 Gnk2-homologous domains span residues 29–131 (HMAT…DKFF) and 137–247 (TKPN…TSNS). N-linked (GlcNAc...) asparagine glycans are attached at residues N35, N40, N44, N60, N69, N90, N100, N108, N209, and N246. Residues 266–284 (GNNKILVGMILAVSVFAFL) form a helical membrane-spanning segment. Residues 285-286 (GL) are Cytoplasmic-facing.

It belongs to the cysteine-rich repeat secretory protein family.

It localises to the membrane. In Arabidopsis thaliana (Mouse-ear cress), this protein is Cysteine-rich repeat secretory protein 57 (CRRSP57).